The following is an 89-amino-acid chain: Small ribosomal subunit protein uS15 (89 aa).

Belongs to the universal ribosomal protein uS15 family. Part of the 30S ribosomal subunit. Forms a bridge to the 50S subunit in the 70S ribosome, contacting the 23S rRNA.

One of the primary rRNA binding proteins, it binds directly to 16S rRNA where it helps nucleate assembly of the platform of the 30S subunit by binding and bridging several RNA helices of the 16S rRNA. In terms of biological role, forms an intersubunit bridge (bridge B4) with the 23S rRNA of the 50S subunit in the ribosome. This Mycolicibacterium vanbaalenii (strain DSM 7251 / JCM 13017 / BCRC 16820 / KCTC 9966 / NRRL B-24157 / PYR-1) (Mycobacterium vanbaalenii) protein is Small ribosomal subunit protein uS15.